We begin with the raw amino-acid sequence, 187 residues long: Elongation factor P (187 aa).

Belongs to the elongation factor P family.

It localises to the cytoplasm. Its pathway is protein biosynthesis; polypeptide chain elongation. Its function is as follows. Involved in peptide bond synthesis. Stimulates efficient translation and peptide-bond synthesis on native or reconstituted 70S ribosomes in vitro. Probably functions indirectly by altering the affinity of the ribosome for aminoacyl-tRNA, thus increasing their reactivity as acceptors for peptidyl transferase. This Mycobacterium marinum (strain ATCC BAA-535 / M) protein is Elongation factor P.